Here is a 681-residue protein sequence, read N- to C-terminus: MTSMYNFKRITCVPNAQELKDVVLSKTQRKTPTVVHRQYSIGRIRAFYARKIKFLQQTLHDKLTQIITEFPKMEEIHPFYSDLMNILYDRDHYKIALGQMNTARHLIDGIAREYVRLMKYADSLYRCKMLKRAALGRMVKLLKRQKSSFEYLEQVRQHLSRLPSIDPATRTLILCGFPNVGKSSFINNVTRADVEVQPYAFTTKALYVGHLDYRFLRWQVIDTPGILDQPLEDRNTIEMQAVTALAHLKASVLFMMDVSEQCDRSIEEQLHLFESIRPLFANKPVLIGLNKVDIRHRSDLPPEKAALLDQLEKEGIPIIETSTLTQEGVMGLRDRACDELLAQRVEAKIQAKKITNVEDCVLNRVFVAYPAPRDEKVRAPFVPPGLAAKRAQKKLQEAQELMETDGDEFAAKIPQKPGKIGKEKIAKGGSQSTDLGDLRDENTRRLEREIELEMQDDYILDLKKHYMLKNPDEKYDIVPEIWEGHNLADFVDPEIQSKLENLLREEELLEQAGEYESDLDSDDEETKEKLKLALQIREKEKLLTLDHAVNKRIAGRIGSRIHGSRKRDRSMSRLENELGELGVDVDTKKMKNLQGQCAKPQLGKKMKVGRSRSLSAVRPAPRDELAFPDEEKRAHVDKLRTKAMRGLRREAKKGEADRHVYDLKPKHLFCGKRGNGKTDWR.

One can recognise an OBG-type G domain in the interval arginine 170–leucine 341. Residues glycine 176–serine 183, aspartate 222–isoleucine 226, and asparagine 290–aspartate 293 contribute to the GTP site.

This sequence belongs to the TRAFAC class OBG-HflX-like GTPase superfamily. OBG GTPase family. NOG subfamily. In terms of tissue distribution, ubiquitously expressed.

It is found in the nucleus. It localises to the nucleolus. In terms of biological role, involved in the biogenesis of the 60S ribosomal subunit. Has a role in regulating longevity, growth and brood size. May regulate fat storage via the insulin/IGF pathway. This Caenorhabditis elegans protein is Nucleolar GTP-binding protein 1.